The following is a 304-amino-acid chain: 17-beta-hydroxysteroid dehydrogenase 13 (304 aa).

Positions 1 to 19 (MNLILEFLLLVGVIIYSYL) are cleaved as a signal peptide. Phosphoserine is present on S33. An NAD(+)-binding site is contributed by 40–67 (LITGAGHGIGRLTAYEFAKQKSRLVLWD). K79 carries the N6-acetyllysine modification. A substrate-binding site is contributed by S172. Y185 acts as the Proton acceptor in catalysis. NAD(+) is bound at residue K189. Positions 276–304 (SSKHPHGGSQQPVTPIPGDLTPSSDFLKH) are disordered.

The protein belongs to the short-chain dehydrogenases/reductases (SDR) family. In terms of tissue distribution, expressed predominantly in the liver (at protein level).

It localises to the lipid droplet. The protein resides in the endoplasmic reticulum. It catalyses the reaction 17beta-estradiol + NAD(+) = estrone + NADH + H(+). The enzyme catalyses all-trans-retinol + NAD(+) = all-trans-retinal + NADH + H(+). The catalysed reaction is all-trans-retinal + NAD(+) + H2O = all-trans-retinoate + NADH + 2 H(+). Functionally, plays a pivotal role in hepatic lipid metabolism. In vitro, it catalyzes the oxidation of a variety of lipid substrates, including 17beta-estradiol, retinol, retinal, and leukotriene B4. This Mus musculus (Mouse) protein is 17-beta-hydroxysteroid dehydrogenase 13 (Hsd17b13).